Reading from the N-terminus, the 261-residue chain is Cytochrome c oxidase subunit 3 (261 aa).

Helical transmembrane passes span 31-51 (LVLWFHTGNIILLFTGLLLLI), 82-102 (PMILFITSEVCFFFAFFWAFF), 126-146 (PFLVPLLNTAVLLSSGVTITW), 159-179 (AIQALFLTVVLGIYFTILQAW), 197-217 (FFVATGFHGLHVIIGTTFLLV), and 239-259 (AWYWHFVDVVWLFLYVCIYWW).

The protein belongs to the cytochrome c oxidase subunit 3 family. In terms of assembly, component of the cytochrome c oxidase (complex IV, CIV), a multisubunit enzyme composed of a catalytic core of 3 subunits and several supernumerary subunits. The complex exists as a monomer or a dimer and forms supercomplexes (SCs) in the inner mitochondrial membrane with ubiquinol-cytochrome c oxidoreductase (cytochrome b-c1 complex, complex III, CIII).

Its subcellular location is the mitochondrion inner membrane. It catalyses the reaction 4 Fe(II)-[cytochrome c] + O2 + 8 H(+)(in) = 4 Fe(III)-[cytochrome c] + 2 H2O + 4 H(+)(out). Component of the cytochrome c oxidase, the last enzyme in the mitochondrial electron transport chain which drives oxidative phosphorylation. The respiratory chain contains 3 multisubunit complexes succinate dehydrogenase (complex II, CII), ubiquinol-cytochrome c oxidoreductase (cytochrome b-c1 complex, complex III, CIII) and cytochrome c oxidase (complex IV, CIV), that cooperate to transfer electrons derived from NADH and succinate to molecular oxygen, creating an electrochemical gradient over the inner membrane that drives transmembrane transport and the ATP synthase. Cytochrome c oxidase is the component of the respiratory chain that catalyzes the reduction of oxygen to water. Electrons originating from reduced cytochrome c in the intermembrane space (IMS) are transferred via the dinuclear copper A center (CU(A)) of subunit 2 and heme A of subunit 1 to the active site in subunit 1, a binuclear center (BNC) formed by heme A3 and copper B (CU(B)). The BNC reduces molecular oxygen to 2 water molecules using 4 electrons from cytochrome c in the IMS and 4 protons from the mitochondrial matrix. The protein is Cytochrome c oxidase subunit 3 (COIII) of Paracentrotus lividus (Common sea urchin).